We begin with the raw amino-acid sequence, 425 residues long: UDP-N-acetylglucosamine 1-carboxyvinyltransferase (425 aa).

Phosphoenolpyruvate is bound at residue 23–24; the sequence is KN. R100 contributes to the UDP-N-acetyl-alpha-D-glucosamine binding site. C124 functions as the Proton donor in the catalytic mechanism. A 2-(S-cysteinyl)pyruvic acid O-phosphothioketal modification is found at C124. Positions 313 and 335 each coordinate UDP-N-acetyl-alpha-D-glucosamine.

It belongs to the EPSP synthase family. MurA subfamily.

It is found in the cytoplasm. It carries out the reaction phosphoenolpyruvate + UDP-N-acetyl-alpha-D-glucosamine = UDP-N-acetyl-3-O-(1-carboxyvinyl)-alpha-D-glucosamine + phosphate. The protein operates within cell wall biogenesis; peptidoglycan biosynthesis. Cell wall formation. Adds enolpyruvyl to UDP-N-acetylglucosamine. This is UDP-N-acetylglucosamine 1-carboxyvinyltransferase from Wolbachia sp. subsp. Brugia malayi (strain TRS).